Reading from the N-terminus, the 570-residue chain is Urease subunit alpha (570 aa).

Residues 131–570 (GGFDSHIHFI…LPLAQRYFMF (440 aa)) form the Urease domain. Residues H136, H138, and K219 each contribute to the Ni(2+) site. An N6-carboxylysine modification is found at K219. H221 is a binding site for substrate. Ni(2+)-binding residues include H248 and H274. The Proton donor role is filled by H322. Ni(2+) is bound at residue D362.

This sequence belongs to the metallo-dependent hydrolases superfamily. Urease alpha subunit family. In terms of assembly, heterotrimer of UreA (gamma), UreB (beta) and UreC (alpha) subunits. Three heterotrimers associate to form the active enzyme. Requires Ni cation as cofactor. In terms of processing, carboxylation allows a single lysine to coordinate two nickel ions.

Its subcellular location is the cytoplasm. It carries out the reaction urea + 2 H2O + H(+) = hydrogencarbonate + 2 NH4(+). The protein operates within nitrogen metabolism; urea degradation; CO(2) and NH(3) from urea (urease route): step 1/1. This chain is Urease subunit alpha, found in Rhodopseudomonas palustris (strain TIE-1).